A 449-amino-acid polypeptide reads, in one-letter code: Phosphoglucosamine mutase (449 aa).

The active-site Phosphoserine intermediate is S102. Mg(2+) is bound by residues S102, D241, D243, and D245. A Phosphoserine modification is found at S102.

Belongs to the phosphohexose mutase family. The cofactor is Mg(2+). In terms of processing, activated by phosphorylation.

It carries out the reaction alpha-D-glucosamine 1-phosphate = D-glucosamine 6-phosphate. In terms of biological role, catalyzes the conversion of glucosamine-6-phosphate to glucosamine-1-phosphate. This Pseudoalteromonas translucida (strain TAC 125) protein is Phosphoglucosamine mutase.